A 365-amino-acid chain; its full sequence is MSRPVPNPGILDIAPYTPGKSPVAQPGRKVFKLSANETPFGPSPHAIAAYQSAADHLEDYPEGTSRVLREAIGKTFGLDPDRIICGAGSDEILNLLAHTYLAPGDEAIATTYGFLVYPIATMANGAKLVIAEEKNLTCDVDAILAKVSPNTKLVWLANPNNPTGTYIPFDEVRRLRAGLPEHVVLVLDGAYADYVAKNDYETGIELVSTTENTVVCHTFSKIHGLAALRIGWMFGPANIVDAVNRIRGPFNTSVPAQLAAVAAIKDTAHVEMSRAHTIQWRDRLTEEFTKLGLTVTPSVCNFVLMHFPQTAGKTAAEADAFLTQRGLVLRGLNNYGLPHALRMTIGTDEANELVIAALREFMAQP.

Residues Met1–Pro22 form a disordered region. Lys221 is modified (N6-(pyridoxal phosphate)lysine).

The protein belongs to the class-II pyridoxal-phosphate-dependent aminotransferase family. Histidinol-phosphate aminotransferase subfamily. Homodimer. Requires pyridoxal 5'-phosphate as cofactor.

The enzyme catalyses L-histidinol phosphate + 2-oxoglutarate = 3-(imidazol-4-yl)-2-oxopropyl phosphate + L-glutamate. It functions in the pathway amino-acid biosynthesis; L-histidine biosynthesis; L-histidine from 5-phospho-alpha-D-ribose 1-diphosphate: step 7/9. The chain is Histidinol-phosphate aminotransferase from Rhodopseudomonas palustris (strain BisA53).